A 370-amino-acid polypeptide reads, in one-letter code: Coproporphyrin III ferrochelatase (370 aa).

Residues Ser-58 and Tyr-127 each contribute to the Fe-coproporphyrin III site. Fe(2+) is bound by residues His-189 and Glu-276.

The protein belongs to the ferrochelatase family.

The protein resides in the cytoplasm. It carries out the reaction Fe-coproporphyrin III + 2 H(+) = coproporphyrin III + Fe(2+). Its pathway is porphyrin-containing compound metabolism; protoheme biosynthesis. Functionally, involved in coproporphyrin-dependent heme b biosynthesis. Catalyzes the insertion of ferrous iron into coproporphyrin III to form Fe-coproporphyrin III. This Corynebacterium glutamicum (strain ATCC 13032 / DSM 20300 / JCM 1318 / BCRC 11384 / CCUG 27702 / LMG 3730 / NBRC 12168 / NCIMB 10025 / NRRL B-2784 / 534) protein is Coproporphyrin III ferrochelatase.